Reading from the N-terminus, the 256-residue chain is Imidazole glycerol phosphate synthase subunit HisF (256 aa).

Residues aspartate 13 and aspartate 132 contribute to the active site.

It belongs to the HisA/HisF family. In terms of assembly, heterodimer of HisH and HisF.

The protein localises to the cytoplasm. It carries out the reaction 5-[(5-phospho-1-deoxy-D-ribulos-1-ylimino)methylamino]-1-(5-phospho-beta-D-ribosyl)imidazole-4-carboxamide + L-glutamine = D-erythro-1-(imidazol-4-yl)glycerol 3-phosphate + 5-amino-1-(5-phospho-beta-D-ribosyl)imidazole-4-carboxamide + L-glutamate + H(+). It functions in the pathway amino-acid biosynthesis; L-histidine biosynthesis; L-histidine from 5-phospho-alpha-D-ribose 1-diphosphate: step 5/9. In terms of biological role, IGPS catalyzes the conversion of PRFAR and glutamine to IGP, AICAR and glutamate. The HisF subunit catalyzes the cyclization activity that produces IGP and AICAR from PRFAR using the ammonia provided by the HisH subunit. This chain is Imidazole glycerol phosphate synthase subunit HisF, found in Leptospira borgpetersenii serovar Hardjo-bovis (strain JB197).